A 203-amino-acid chain; its full sequence is Probable nicotinate-nucleotide adenylyltransferase (203 aa).

This sequence belongs to the NadD family.

The enzyme catalyses nicotinate beta-D-ribonucleotide + ATP + H(+) = deamido-NAD(+) + diphosphate. The protein operates within cofactor biosynthesis; NAD(+) biosynthesis; deamido-NAD(+) from nicotinate D-ribonucleotide: step 1/1. Catalyzes the reversible adenylation of nicotinate mononucleotide (NaMN) to nicotinic acid adenine dinucleotide (NaAD). The protein is Probable nicotinate-nucleotide adenylyltransferase of Clostridium kluyveri (strain ATCC 8527 / DSM 555 / NBRC 12016 / NCIMB 10680 / K1).